The chain runs to 119 residues: Aspartate 1-decarboxylase (119 aa).

Serine 25 acts as the Schiff-base intermediate with substrate; via pyruvic acid in catalysis. Pyruvic acid (Ser) is present on serine 25. A substrate-binding site is contributed by threonine 57. The active-site Proton donor is the tyrosine 58. Residue 73 to 75 (GAA) coordinates substrate.

The protein belongs to the PanD family. Heterooctamer of four alpha and four beta subunits. The cofactor is pyruvate. In terms of processing, is synthesized initially as an inactive proenzyme, which is activated by self-cleavage at a specific serine bond to produce a beta-subunit with a hydroxyl group at its C-terminus and an alpha-subunit with a pyruvoyl group at its N-terminus.

It localises to the cytoplasm. It catalyses the reaction L-aspartate + H(+) = beta-alanine + CO2. The protein operates within cofactor biosynthesis; (R)-pantothenate biosynthesis; beta-alanine from L-aspartate: step 1/1. Catalyzes the pyruvoyl-dependent decarboxylation of aspartate to produce beta-alanine. The polypeptide is Aspartate 1-decarboxylase (Herminiimonas arsenicoxydans).